Consider the following 84-residue polypeptide: MEPTKDETHAIVEFVDVLLRDGAVIQADVIVTVADIPLIGISLRAAIAGMTTMTEYGLFEEWDAAHRQQSEAFTTSPTADRRED.

Positions 1–25 (MEPTKDETHAIVEFVDVLLRDGAVI) are interacts with GvpL1. An alpha helix 1 region spans residues 5-21 (KDETHAIVEFVDVLLRD). Beta-strand stretches follow at residues 27-29 (ADV) and 41-43 (ISL). The Conserved in GvpJ1/2 but not GvpA motif lies at 44–48 (RAAIA). Alpha helix regions lie at residues 46 to 56 (AIAGMTTMTEY) and 62 to 84 (WDAA…RRED).

It belongs to the gas vesicle GvpA family. In terms of assembly, gvpF to GvpM interact with each other in vitro, and may form multi-subunit complex(es). Might interact with GvpA1.

It is found in the gas vesicle. Functionally, proteins GvpF to GvpM might be involved in nucleating gas vesicle formation. A minor component of the gas vesicle. Gas vesicles are hollow, gas filled proteinaceous nanostructures found in several microbial planktonic microorganisms. They allow positioning of halobacteria at the optimal depth for growth in the poorly aerated, shallow brine pools of their habitat. Its function is as follows. Expression of a 9.5 kb p-vac DNA fragment containing 2 divergently transcribed regions (gvpD-gvpE-gvpF-gvpG-gvpH-gvpI-gvpJ-gvpK-gvpL-gvpM and gvpA-gvpC-gvpN-gvpO) allows H.volcanii to produce gas vesicles. All site-directed mutagenesis is tested in H.volcanii. A minimal gas vesicle can be made in H.volcanii by gvpA1-gvpO1 plus gvpF1-gvpG1-gvpJ1-gvpK1-gvpL1-gvpM1; lack of enough GvpJ1 prevents formation. A similar region restores gas vesicle production in H.halobium without the p-vac locus, but it still has the c-vac locus. This Halobacterium salinarum (strain ATCC 700922 / JCM 11081 / NRC-1) (Halobacterium halobium) protein is Gas vesicle protein M1 (gvpM11).